The sequence spans 764 residues: 5-methyltetrahydropteroyltriglutamate--homocysteine methyltransferase (764 aa).

5-methyltetrahydropteroyltri-L-glutamate contacts are provided by residues 16–19 (RELK) and Lys115. L-homocysteine-binding positions include 435–437 (IGS) and Glu488. Residues 435–437 (IGS) and Glu488 contribute to the L-methionine site. Residues 519–520 (RC) and Trp565 each bind 5-methyltetrahydropteroyltri-L-glutamate. Residue Asp603 coordinates L-homocysteine. Asp603 is a binding site for L-methionine. Glu609 is a 5-methyltetrahydropteroyltri-L-glutamate binding site. His645, Cys647, and Glu669 together coordinate Zn(2+). His698 (proton donor) is an active-site residue. Cys730 contacts Zn(2+).

It belongs to the vitamin-B12 independent methionine synthase family. The cofactor is Zn(2+).

It carries out the reaction 5-methyltetrahydropteroyltri-L-glutamate + L-homocysteine = tetrahydropteroyltri-L-glutamate + L-methionine. It functions in the pathway amino-acid biosynthesis; L-methionine biosynthesis via de novo pathway; L-methionine from L-homocysteine (MetE route): step 1/1. In terms of biological role, catalyzes the transfer of a methyl group from 5-methyltetrahydrofolate to homocysteine resulting in methionine formation. The chain is 5-methyltetrahydropteroyltriglutamate--homocysteine methyltransferase from Burkholderia pseudomallei (strain K96243).